Here is a 228-residue protein sequence, read N- to C-terminus: Endo-1,4-beta-xylanase A (228 aa).

An N-terminal signal peptide occupies residues 1–27 (MNLRKLRLLFVMCIGLTLILTAVPAHA). One can recognise a GH11 domain in the interval 29–222 (TITNNEMGNH…SSGSANVMTN (194 aa)). The active-site Nucleophile is the E120. The active-site Proton donor is E209.

Belongs to the glycosyl hydrolase 11 (cellulase G) family.

The catalysed reaction is Endohydrolysis of (1-&gt;4)-beta-D-xylosidic linkages in xylans.. It participates in glycan degradation; xylan degradation. The polypeptide is Endo-1,4-beta-xylanase A (xynA) (Bacillus pumilus (Bacillus mesentericus)).